We begin with the raw amino-acid sequence, 383 residues long: Putative glutamate--cysteine ligase 2-2 (383 aa).

It belongs to the glutamate--cysteine ligase type 2 family. YbdK subfamily.

It catalyses the reaction L-cysteine + L-glutamate + ATP = gamma-L-glutamyl-L-cysteine + ADP + phosphate + H(+). In terms of biological role, ATP-dependent carboxylate-amine ligase which exhibits weak glutamate--cysteine ligase activity. The polypeptide is Putative glutamate--cysteine ligase 2-2 (Legionella pneumophila (strain Lens)).